A 78-amino-acid polypeptide reads, in one-letter code: Apolipoprotein C-I (78 aa).

The first 26 residues, 1-26 (MRLILWLPVLVVVLLMVLEGPAPAQG), serve as a signal peptide directing secretion.

This sequence belongs to the apolipoprotein C1 family.

Its subcellular location is the secreted. Its function is as follows. Inhibitor of lipoprotein binding to the low density lipoprotein (LDL) receptor, LDL receptor-related protein, and very low density lipoprotein (VLDL) receptor. Associates with high density lipoproteins (HDL) and the triacylglycerol-rich lipoproteins in the plasma and makes up about 10% of the protein of the VLDL and 2% of that of HDL. Appears to interfere directly with fatty acid uptake and is also the major plasma inhibitor of cholesteryl ester transfer protein (CETP). Binds free fatty acids and reduces their intracellular esterification. Modulates the interaction of APOE with beta-migrating VLDL and inhibits binding of beta-VLDL to the LDL receptor-related protein. The sequence is that of Apolipoprotein C-I (APOC1) from Puma concolor (Mountain lion).